A 128-amino-acid chain; its full sequence is Small ribosomal subunit protein bS6 (128 aa).

It belongs to the bacterial ribosomal protein bS6 family.

Functionally, binds together with bS18 to 16S ribosomal RNA. The protein is Small ribosomal subunit protein bS6 of Acinetobacter baylyi (strain ATCC 33305 / BD413 / ADP1).